Consider the following 853-residue polypeptide: DNA mismatch repair protein MutS (853 aa).

ATP is bound at residue 614-621 (GPNMGGKS).

Belongs to the DNA mismatch repair MutS family.

In terms of biological role, this protein is involved in the repair of mismatches in DNA. It is possible that it carries out the mismatch recognition step. This protein has a weak ATPase activity. This is DNA mismatch repair protein MutS from Enterobacter sp. (strain 638).